A 297-amino-acid polypeptide reads, in one-letter code: Large ribosomal subunit protein uL10 (297 aa).

It belongs to the universal ribosomal protein uL10 family. In terms of assembly, part of the 50S ribosomal subunit. Forms part of the ribosomal stalk which helps the ribosome interact with GTP-bound translation factors. Forms a heptameric L10(L12)2(L12)2(L12)2 complex, where L10 forms an elongated spine to which the L12 dimers bind in a sequential fashion.

Forms part of the ribosomal stalk, playing a central role in the interaction of the ribosome with GTP-bound translation factors. The chain is Large ribosomal subunit protein uL10 from Methanococcus voltae.